Reading from the N-terminus, the 239-residue chain is Small ribosomal subunit protein uS3c (239 aa).

One can recognise a KH type-2 domain in the interval 43-139; that stretch reads IKNYIQKNRK…RLNISIEKVK (97 aa). Residues 50-80 are disordered; sequence NRKKSSNRKLESDSSSEVITHNRKNDSGSSS.

It belongs to the universal ribosomal protein uS3 family. Part of the 30S ribosomal subunit.

It localises to the plastid. The protein localises to the chloroplast. The sequence is that of Small ribosomal subunit protein uS3c (rps3) from Lolium perenne (Perennial ryegrass).